The primary structure comprises 318 residues: Beta-ketoacyl-[acyl-carrier-protein] synthase III (318 aa).

Active-site residues include Cys113 and His245. An ACP-binding region spans residues 246–250 (QANIR). Asn275 is a catalytic residue.

It belongs to the thiolase-like superfamily. FabH family. As to quaternary structure, homodimer.

Its subcellular location is the cytoplasm. It catalyses the reaction malonyl-[ACP] + acetyl-CoA + H(+) = 3-oxobutanoyl-[ACP] + CO2 + CoA. It functions in the pathway lipid metabolism; fatty acid biosynthesis. Functionally, catalyzes the condensation reaction of fatty acid synthesis by the addition to an acyl acceptor of two carbons from malonyl-ACP. Catalyzes the first condensation reaction which initiates fatty acid synthesis and may therefore play a role in governing the total rate of fatty acid production. Possesses both acetoacetyl-ACP synthase and acetyl transacylase activities. Its substrate specificity determines the biosynthesis of branched-chain and/or straight-chain of fatty acids. The chain is Beta-ketoacyl-[acyl-carrier-protein] synthase III from Wolbachia pipientis subsp. Culex pipiens (strain wPip).